The primary structure comprises 218 residues: uncharacterized protein (218 aa).

7 residues coordinate Zn(2+): His57, His59, Asp61, His62, His138, Asp158, and His199.

This sequence belongs to the metallo-beta-lactamase superfamily. Glyoxalase II family. It depends on Zn(2+) as a cofactor.

This is an uncharacterized protein from Mycobacterium leprae (strain TN).